Here is a 1001-residue protein sequence, read N- to C-terminus: Copper-transporting ATPase RAN1 (1001 aa).

A disordered region spans residues M1–I21. Residues M1 to R298 lie on the Cytoplasmic side of the membrane. Residues T11 to I21 show a composition bias toward polar residues. HMA domains lie at R56–E122 and L133–S199. The Cu(+) site is built by C67, C70, C144, and C147. The 67-residue stretch at D207–F273 folds into the HMA 3; degenerate domain. A helical membrane pass occupies residues F299–A320. Residues L321–W338 are Extracellular-facing. A helical transmembrane segment spans residues L339–A358. Residues A359–N365 lie on the Cytoplasmic side of the membrane. The helical transmembrane segment at G366–V386 threads the bilayer. Over G387 to F403 the chain is Extracellular. The chain crosses the membrane as a helical span at residues D404–K424. Topologically, residues G425–Y558 are cytoplasmic. A helical transmembrane segment spans residues V559–G581. Over G582–S602 the chain is Extracellular. The helical transmembrane segment at L603–L620 threads the bilayer. Over A621–I931 the chain is Cytoplasmic. The active-site 4-aspartylphosphate intermediate is the D658. 2 residues coordinate Mg(2+): D877 and D881. The chain crosses the membrane as a helical span at residues R932–G951. Topologically, residues V952–P963 are extracellular. A helical membrane pass occupies residues W964 to L982. The Cytoplasmic segment spans residues L983 to E1001.

The protein belongs to the cation transport ATPase (P-type) (TC 3.A.3) family. Type IB subfamily.

Its subcellular location is the membrane. It catalyses the reaction Cu(+)(in) + ATP + H2O = Cu(+)(out) + ADP + phosphate + H(+). Functionally, involved in copper import into the cell. Essential for ethylene signaling, which requires copper. Acts by delivering copper to create functional hormone receptors. The chain is Copper-transporting ATPase RAN1 (RAN1) from Arabidopsis thaliana (Mouse-ear cress).